The chain runs to 344 residues: Sorting nexin-16 (344 aa).

Positions Met-1–Met-10 are enriched in pro residues. Disordered stretches follow at residues Met-1–Ser-66 and Ala-81–Pro-107. Positions Asn-14 to Arg-26 are enriched in polar residues. Over residues Ser-27–Ser-40 the composition is skewed to low complexity. The span at Lys-41–Ser-66 shows a compositional bias: polar residues. The region spanning Asp-105–Gly-218 is the PX domain. 3 residues coordinate a 1,2-diacyl-sn-glycero-3-phospho-(1D-myo-inositol-3-phosphate): Arg-144, Thr-146, and Arg-184. Phosphoserine is present on Ser-222. A coiled-coil region spans residues Leu-223–Glu-278.

The protein belongs to the sorting nexin family. In terms of assembly, homooligomer. Interacts with EGFR. In terms of tissue distribution, detected in placenta, lung, liver,heart and pancreas.

It is found in the early endosome membrane. The protein localises to the late endosome membrane. Its subcellular location is the cytoplasm. The protein resides in the lysosome. In terms of biological role, may be involved in several stages of intracellular trafficking. Plays a role in protein transport from early to late endosomes. Plays a role in protein transport to the lysosome. Promotes degradation of EGFR after EGF signaling. Plays a role in intracellular transport of vesicular stomatitis virus nucleocapsids from the endosome to the cytoplasm. The sequence is that of Sorting nexin-16 (SNX16) from Homo sapiens (Human).